The sequence spans 274 residues: MNPEHSPLGKATVYAAQYDASLLFPIPRAGAREQLGITSALPFFGTDIWNAYELSWLNARGKPQLAVATFYVPAESPNIVESKSFKLYLGSFAQSKFDSLDAVRDTLKRDVSAACGASVSVQLVSPHDFGKLQMEELDGLSLDRLDLDTDVYEPDPSLLSAAQEEAPVEETLVSDLLRSNCPVTGQPDWGSVQIHYVGPQIDHAGLLRYIISFRNHTGFHEQCVERIFLDILHACKPLKLAVYARYTRRGGLDINPFRTNYNQPMPDNARTARQ.

Position 80–82 (80–82 (VES)) interacts with substrate. 82-83 (SK) is an NADPH binding site. Cysteine 181 serves as the catalytic Thioimide intermediate. The Proton donor role is filled by aspartate 188. Residue 220-221 (HE) participates in substrate binding. Residue 249–250 (RG) participates in NADPH binding.

This sequence belongs to the GTP cyclohydrolase I family. QueF type 2 subfamily. Homodimer.

The protein resides in the cytoplasm. It catalyses the reaction 7-aminomethyl-7-carbaguanine + 2 NADP(+) = 7-cyano-7-deazaguanine + 2 NADPH + 3 H(+). Its pathway is tRNA modification; tRNA-queuosine biosynthesis. In terms of biological role, catalyzes the NADPH-dependent reduction of 7-cyano-7-deazaguanine (preQ0) to 7-aminomethyl-7-deazaguanine (preQ1). The sequence is that of NADPH-dependent 7-cyano-7-deazaguanine reductase from Burkholderia ambifaria (strain MC40-6).